A 321-amino-acid chain; its full sequence is Lipoyl synthase (321 aa).

Residues Cys-68, Cys-73, Cys-79, Cys-94, Cys-98, Cys-101, and Ser-308 each coordinate [4Fe-4S] cluster. Residues 80–297 (FNHGTATFMI…KEEALAMGFT (218 aa)) enclose the Radical SAM core domain.

It belongs to the radical SAM superfamily. Lipoyl synthase family. Requires [4Fe-4S] cluster as cofactor.

The protein resides in the cytoplasm. The catalysed reaction is [[Fe-S] cluster scaffold protein carrying a second [4Fe-4S](2+) cluster] + N(6)-octanoyl-L-lysyl-[protein] + 2 oxidized [2Fe-2S]-[ferredoxin] + 2 S-adenosyl-L-methionine + 4 H(+) = [[Fe-S] cluster scaffold protein] + N(6)-[(R)-dihydrolipoyl]-L-lysyl-[protein] + 4 Fe(3+) + 2 hydrogen sulfide + 2 5'-deoxyadenosine + 2 L-methionine + 2 reduced [2Fe-2S]-[ferredoxin]. It functions in the pathway protein modification; protein lipoylation via endogenous pathway; protein N(6)-(lipoyl)lysine from octanoyl-[acyl-carrier-protein]: step 2/2. In terms of biological role, catalyzes the radical-mediated insertion of two sulfur atoms into the C-6 and C-8 positions of the octanoyl moiety bound to the lipoyl domains of lipoate-dependent enzymes, thereby converting the octanoylated domains into lipoylated derivatives. The chain is Lipoyl synthase from Photorhabdus laumondii subsp. laumondii (strain DSM 15139 / CIP 105565 / TT01) (Photorhabdus luminescens subsp. laumondii).